Consider the following 390-residue polypeptide: Protein TAB2 homolog, chloroplastic (390 aa).

A chloroplast-targeting transit peptide spans 1 to 69 (MTTATAIVAG…RSISSESSTE (69 aa)). Residues 16 to 85 (RRSLPLPNPP…IADEEVEAEN (70 aa)) are disordered. Residues 61–75 (SISSESSTEASAAAD) show a composition bias toward low complexity.

It is found in the plastid. The protein resides in the chloroplast. Its function is as follows. Nuclear genome-encoded factor involved in the biogenesis of photosystem I (PSI). Required for the accumulation of PSI during plant development. Does not seem to be required for the translation of mRNAs of the PSI subunits. This Zea mays (Maize) protein is Protein TAB2 homolog, chloroplastic.